A 204-amino-acid chain; its full sequence is Urease accessory protein UreG (204 aa).

Residue 11–18 coordinates GTP; the sequence is GPVGAGKT.

This sequence belongs to the SIMIBI class G3E GTPase family. UreG subfamily. As to quaternary structure, homodimer. UreD, UreF and UreG form a complex that acts as a GTP-hydrolysis-dependent molecular chaperone, activating the urease apoprotein by helping to assemble the nickel containing metallocenter of UreC. The UreE protein probably delivers the nickel.

The protein resides in the cytoplasm. Its function is as follows. Facilitates the functional incorporation of the urease nickel metallocenter. This process requires GTP hydrolysis, probably effectuated by UreG. This Staphylococcus saprophyticus subsp. saprophyticus (strain ATCC 15305 / DSM 20229 / NCIMB 8711 / NCTC 7292 / S-41) protein is Urease accessory protein UreG.